The primary structure comprises 545 residues: Pseudouridylate synthase RPUSD2 (545 aa).

The interval 48-121 is disordered; it reads GLRASHQQNG…PPPKKRRTGV (74 aa). Phosphoserine is present on Ser-68. Asp-274 is an active-site residue. Thr-477 is subject to Phosphothreonine.

This sequence belongs to the pseudouridine synthase RluA family.

The catalysed reaction is a uridine in mRNA = a pseudouridine in mRNA. Pseudouridine synthase that catalyzes pseudouridylation of mRNAs. The polypeptide is Pseudouridylate synthase RPUSD2 (Homo sapiens (Human)).